A 410-amino-acid chain; its full sequence is NIPA-like protein 3 (410 aa).

The segment at 1–24 (MDGAHSAGLQLQPLPPTSGATSTS) is disordered. 9 helical membrane-spanning segments follow: residues 37–57 (NLIG…ALNL), 80–100 (WWLG…SYAF), 105–125 (LIVP…IIFI), 139–159 (VLSF…VTFA), 175–195 (LVSW…CLLL), 206–226 (IVVI…TVKA), 244–264 (PIFY…ATFL), 275–295 (LIAS…GAIF), and 304–324 (ALHI…VFLI). At Ser376 the chain carries Phosphoserine. A disordered region spans residues 389-410 (EEHSSRSTPGVPYRVLEHTKKE).

The protein belongs to the NIPA family.

It is found in the membrane. In Mus musculus (Mouse), this protein is NIPA-like protein 3 (Nipal3).